The sequence spans 597 residues: Aspartate--tRNA(Asp/Asn) ligase (597 aa).

Residue glutamate 178 participates in L-aspartate binding. Residues 202–205 (QLFK) form an aspartate region. Arginine 224 serves as a coordination point for L-aspartate. ATP contacts are provided by residues 224 to 226 (RDE) and glutamine 233. An L-aspartate-binding site is contributed by histidine 458. Glutamate 488 contacts ATP. Arginine 495 is a binding site for L-aspartate. 540–543 (GLDR) is an ATP binding site.

This sequence belongs to the class-II aminoacyl-tRNA synthetase family. Type 1 subfamily. In terms of assembly, homodimer.

The protein resides in the cytoplasm. The catalysed reaction is tRNA(Asx) + L-aspartate + ATP = L-aspartyl-tRNA(Asx) + AMP + diphosphate. Aspartyl-tRNA synthetase with relaxed tRNA specificity since it is able to aspartylate not only its cognate tRNA(Asp) but also tRNA(Asn). Reaction proceeds in two steps: L-aspartate is first activated by ATP to form Asp-AMP and then transferred to the acceptor end of tRNA(Asp/Asn). In Cyanothece sp. (strain PCC 7425 / ATCC 29141), this protein is Aspartate--tRNA(Asp/Asn) ligase.